A 451-amino-acid chain; its full sequence is Probable glycine dehydrogenase (decarboxylating) subunit 1 (451 aa).

This sequence belongs to the GcvP family. N-terminal subunit subfamily. As to quaternary structure, the glycine cleavage system is composed of four proteins: P, T, L and H. In this organism, the P 'protein' is a heterodimer of two subunits.

It carries out the reaction N(6)-[(R)-lipoyl]-L-lysyl-[glycine-cleavage complex H protein] + glycine + H(+) = N(6)-[(R)-S(8)-aminomethyldihydrolipoyl]-L-lysyl-[glycine-cleavage complex H protein] + CO2. Its function is as follows. The glycine cleavage system catalyzes the degradation of glycine. The P protein binds the alpha-amino group of glycine through its pyridoxal phosphate cofactor; CO(2) is released and the remaining methylamine moiety is then transferred to the lipoamide cofactor of the H protein. The sequence is that of Probable glycine dehydrogenase (decarboxylating) subunit 1 from Thioalkalivibrio sulfidiphilus (strain HL-EbGR7).